A 312-amino-acid chain; its full sequence is Zinc import ATP-binding protein ZnuC (312 aa).

Residues 13–228 (VSLEDVGVLR…PEYVRLFGSR (216 aa)) form the ABC transporter domain. Position 45 to 52 (45 to 52 (GPNGSGKS)) interacts with ATP. A disordered region spans residues 241-312 (DHTHLPDGRV…HSRSGEGRHA (72 aa)). Residues 243–312 (THLPDGRVLH…HSRSGEGRHA (70 aa)) are compositionally biased toward basic and acidic residues.

The protein belongs to the ABC transporter superfamily. Zinc importer (TC 3.A.1.15.5) family. The complex is composed of two ATP-binding proteins (ZnuC), two transmembrane proteins (ZnuB) and a solute-binding protein (ZnuA).

The protein resides in the cell inner membrane. It carries out the reaction Zn(2+)(out) + ATP(in) + H2O(in) = Zn(2+)(in) + ADP(in) + phosphate(in) + H(+)(in). Functionally, part of the ABC transporter complex ZnuABC involved in zinc import. Responsible for energy coupling to the transport system. The polypeptide is Zinc import ATP-binding protein ZnuC (Rhizobium etli (strain ATCC 51251 / DSM 11541 / JCM 21823 / NBRC 15573 / CFN 42)).